The sequence spans 596 residues: ATP-dependent lipid A-core flippase (596 aa).

The next 6 membrane-spanning stretches (helical) occupy residues 34-54 (VWVL…EAGI), 80-100 (AAVV…GYLL), 138-158 (AVVF…ITLV), 164-184 (VVFL…IVAI), 263-283 (QPLT…IAVV), and 292-312 (VGGF…LKHL). The 284-residue stretch at 38 to 321 (VAGVLAMAAV…LMDVNQPLQR (284 aa)) folds into the ABC transmembrane type-1 domain. Residues 353-589 (IEFSHVSFSY…GGLYAHLHRI (237 aa)) form the ABC transporter domain. 389–396 (GPSGSGKT) provides a ligand contact to ATP.

This sequence belongs to the ABC transporter superfamily. Lipid exporter (TC 3.A.1.106) family. Homodimer.

Its subcellular location is the cell inner membrane. The enzyme catalyses ATP + H2O + lipid A-core oligosaccharideSide 1 = ADP + phosphate + lipid A-core oligosaccharideSide 2.. Involved in lipopolysaccharide (LPS) biosynthesis. Translocates lipid A-core from the inner to the outer leaflet of the inner membrane. Transmembrane domains (TMD) form a pore in the inner membrane and the ATP-binding domain (NBD) is responsible for energy generation. The protein is ATP-dependent lipid A-core flippase of Burkholderia mallei (strain ATCC 23344).